The following is a 275-amino-acid chain: Large ribosomal subunit protein uL2 (275 aa).

Residues 221–275 (RGTAMNPIDHPHGGGEGKNFGKHPVSPWGVQSKGKKTRKNKRTEKYILYNRKYKK) form a disordered region. The segment covering 253-262 (KGKKTRKNKR) has biased composition (basic residues).

The protein belongs to the universal ribosomal protein uL2 family. In terms of assembly, part of the 50S ribosomal subunit. Forms a bridge to the 30S subunit in the 70S ribosome.

In terms of biological role, one of the primary rRNA binding proteins. Required for association of the 30S and 50S subunits to form the 70S ribosome, for tRNA binding and peptide bond formation. It has been suggested to have peptidyltransferase activity; this is somewhat controversial. Makes several contacts with the 16S rRNA in the 70S ribosome. This chain is Large ribosomal subunit protein uL2, found in Wigglesworthia glossinidia brevipalpis.